The sequence spans 340 residues: Flap endonuclease 1 (340 aa).

Residues methionine 1–arginine 98 form an N-domain region. Residues aspartate 27, aspartate 80, glutamate 151, glutamate 153, aspartate 172, aspartate 174, and aspartate 235 each coordinate Mg(2+). Residues glutamate 115–glycine 256 form an I-domain region. The segment at lysine 332–phenylalanine 340 is interaction with PCNA.

It belongs to the XPG/RAD2 endonuclease family. FEN1 subfamily. As to quaternary structure, interacts with PCNA. PCNA stimulates the nuclease activity without altering cleavage specificity. Mg(2+) serves as cofactor.

Functionally, structure-specific nuclease with 5'-flap endonuclease and 5'-3' exonuclease activities involved in DNA replication and repair. During DNA replication, cleaves the 5'-overhanging flap structure that is generated by displacement synthesis when DNA polymerase encounters the 5'-end of a downstream Okazaki fragment. Binds the unpaired 3'-DNA end and kinks the DNA to facilitate 5' cleavage specificity. Cleaves one nucleotide into the double-stranded DNA from the junction in flap DNA, leaving a nick for ligation. Also involved in the base excision repair (BER) pathway. Acts as a genome stabilization factor that prevents flaps from equilibrating into structures that lead to duplications and deletions. Also possesses 5'-3' exonuclease activity on nicked or gapped double-stranded DNA. This is Flap endonuclease 1 from Methanocella arvoryzae (strain DSM 22066 / NBRC 105507 / MRE50).